A 204-amino-acid polypeptide reads, in one-letter code: Holliday junction branch migration complex subunit RuvA (204 aa).

Residues 1 to 64 (MIGRLQGILL…EDAHLLFGFA (64 aa)) are domain I. Positions 65-143 (QKTDRTLFRE…GIKQSDFFVE (79 aa)) are domain II. The segment at 144–155 (STHIPLSPSIES) is flexible linker. A domain III region spans residues 156–204 (HSESSSDEAISALIALGYKPAEAEKMVKRVAKPELTSEQVIREALKAAL).

The protein belongs to the RuvA family. As to quaternary structure, homotetramer. Forms an RuvA(8)-RuvB(12)-Holliday junction (HJ) complex. HJ DNA is sandwiched between 2 RuvA tetramers; dsDNA enters through RuvA and exits via RuvB. An RuvB hexamer assembles on each DNA strand where it exits the tetramer. Each RuvB hexamer is contacted by two RuvA subunits (via domain III) on 2 adjacent RuvB subunits; this complex drives branch migration. In the full resolvosome a probable DNA-RuvA(4)-RuvB(12)-RuvC(2) complex forms which resolves the HJ.

The protein localises to the cytoplasm. Its function is as follows. The RuvA-RuvB-RuvC complex processes Holliday junction (HJ) DNA during genetic recombination and DNA repair, while the RuvA-RuvB complex plays an important role in the rescue of blocked DNA replication forks via replication fork reversal (RFR). RuvA specifically binds to HJ cruciform DNA, conferring on it an open structure. The RuvB hexamer acts as an ATP-dependent pump, pulling dsDNA into and through the RuvAB complex. HJ branch migration allows RuvC to scan DNA until it finds its consensus sequence, where it cleaves and resolves the cruciform DNA. This Haemophilus influenzae (strain 86-028NP) protein is Holliday junction branch migration complex subunit RuvA.